The primary structure comprises 154 residues: 6,7-dimethyl-8-ribityllumazine synthase (154 aa).

5-amino-6-(D-ribitylamino)uracil-binding positions include F23, 57-59, and 81-83; these read AFE and AVI. A (2S)-2-hydroxy-3-oxobutyl phosphate-binding site is contributed by 86 to 87; the sequence is AT. H89 functions as the Proton donor in the catalytic mechanism. F114 contacts 5-amino-6-(D-ribitylamino)uracil. R128 is a (2S)-2-hydroxy-3-oxobutyl phosphate binding site.

Belongs to the DMRL synthase family.

The enzyme catalyses (2S)-2-hydroxy-3-oxobutyl phosphate + 5-amino-6-(D-ribitylamino)uracil = 6,7-dimethyl-8-(1-D-ribityl)lumazine + phosphate + 2 H2O + H(+). The protein operates within cofactor biosynthesis; riboflavin biosynthesis; riboflavin from 2-hydroxy-3-oxobutyl phosphate and 5-amino-6-(D-ribitylamino)uracil: step 1/2. Catalyzes the formation of 6,7-dimethyl-8-ribityllumazine by condensation of 5-amino-6-(D-ribitylamino)uracil with 3,4-dihydroxy-2-butanone 4-phosphate. This is the penultimate step in the biosynthesis of riboflavin. The polypeptide is 6,7-dimethyl-8-ribityllumazine synthase (Syntrophus aciditrophicus (strain SB)).